Reading from the N-terminus, the 782-residue chain is Beta-mannosyltransferase 9 (782 aa).

At 1 to 26 (MEKLIQSTISLFISLSLKISTKSYKS) the chain is on the cytoplasmic side. Residues 27–47 (IISILFIISLLSIILTTTITV) form a helical membrane-spanning segment. Over 48–782 (YHDPERIITT…GKDKGKDKSN (735 aa)) the chain is Extracellular. Residues 66–96 (KSVFTASSPKQQDKLQQEIDQHQSDNSHEQQ) are disordered. Positions 76–96 (QQDKLQQEIDQHQSDNSHEQQ) are enriched in basic and acidic residues. Asparagine 445, asparagine 648, and asparagine 699 each carry an N-linked (GlcNAc...) asparagine glycan.

Belongs to the BMT family.

Its subcellular location is the membrane. Functionally, beta-mannosyltransferase involved in cell wall biosynthesis through beta-1,2-mannosylation of cell wall phosphopeptidomannan. In Candida albicans (strain SC5314 / ATCC MYA-2876) (Yeast), this protein is Beta-mannosyltransferase 9 (BMT9).